The primary structure comprises 339 residues: Dihydroorotate dehydrogenase (quinone) (339 aa).

FMN contacts are provided by residues 62–66 (AGMDK) and Thr86. Lys66 serves as a coordination point for substrate. Substrate is bound at residue 111–115 (NRMGF). Residues Asn139 and Asn172 each contribute to the FMN site. Asn172 provides a ligand contact to substrate. The Nucleophile role is filled by Ser175. A substrate-binding site is contributed by Asn177. Residues Lys217 and Thr245 each coordinate FMN. Substrate is bound at residue 246 to 247 (NT). FMN is bound by residues Gly268, Gly297, and 318–319 (YS).

Belongs to the dihydroorotate dehydrogenase family. Type 2 subfamily. Monomer. FMN serves as cofactor.

It localises to the cell membrane. It catalyses the reaction (S)-dihydroorotate + a quinone = orotate + a quinol. It participates in pyrimidine metabolism; UMP biosynthesis via de novo pathway; orotate from (S)-dihydroorotate (quinone route): step 1/1. Catalyzes the conversion of dihydroorotate to orotate with quinone as electron acceptor. This is Dihydroorotate dehydrogenase (quinone) from Shewanella sediminis (strain HAW-EB3).